An 83-amino-acid chain; its full sequence is MPQIKSAIKRVKTQAVANERNAAQLSTMRTAVKKFKAAQAAGADNASELYVAAIRELDKAASKGLIHKNKATRDKSRLAKLAK.

It belongs to the bacterial ribosomal protein bS20 family.

Binds directly to 16S ribosomal RNA. This is Small ribosomal subunit protein bS20 from Lactobacillus delbrueckii subsp. bulgaricus (strain ATCC 11842 / DSM 20081 / BCRC 10696 / JCM 1002 / NBRC 13953 / NCIMB 11778 / NCTC 12712 / WDCM 00102 / Lb 14).